A 3357-amino-acid polypeptide reads, in one-letter code: Versican core protein (3357 aa).

The N-terminal stretch at 1–23 (MLINMKGILWMCSTLLLTHALHQ) is a signal peptide. The 123-residue stretch at 24–146 (AKMETSPPVK…EDTQDTMSLA (123 aa)) folds into the Ig-like V-type domain. Disulfide bonds link cysteine 44/cysteine 130, cysteine 172/cysteine 243, cysteine 196/cysteine 217, cysteine 270/cysteine 333, and cysteine 294/cysteine 315. Asparagine 57 carries N-linked (GlcNAc...) asparagine glycosylation. Link domains are found at residues 150 to 245 (VVFH…YCYV) and 251 to 347 (DVFH…YCFK). 3 N-linked (GlcNAc...) asparagine glycosylation sites follow: asparagine 330, asparagine 351, and asparagine 441. Positions 348–1308 (PKQNISEATT…IIEVRENKTG (961 aa)) are GAG-alpha (glucosaminoglycan attachment domain). A compositionally biased stretch (basic and acidic residues) spans 625 to 634 (EPKTNGKVTE). Residues 625–646 (EPKTNGKVTEDEFGQSQPTTTF) form a disordered region. O-linked (Xyl...) (chondroitin sulfate) serine glycosylation is present at serine 660. Disordered stretches follow at residues 801 to 863 (WPGD…KPLE) and 881 to 908 (TSTSIGSAEKSASGEPTTGDRFLPTTST). Asparagine 807 carries N-linked (GlcNAc...) asparagine glycosylation. 2 N-linked (GlcNAc...) asparagine glycosylation sites follow: asparagine 914 and asparagine 951. 2 disordered regions span residues 1010–1088 (SPGA…YPPG) and 1252–1288 (DHMTSKPPVTQPTRPSVVERKTTSKTQELSTSTPAAG). Composition is skewed to polar residues over residues 1017–1042 (TGVSQGETQEEPQTPGSPFPTFSSTA) and 1275–1286 (SKTQELSTSTPA). N-linked (GlcNAc...) asparagine glycosylation is found at asparagine 1305 and asparagine 1371. Residues 1309-3051 (RLSDMIVSGH…VEGTAVYLPG (1743 aa)) form a GAG-beta region. The segment covering 1396–1406 (DPEAAEARRGQ) has biased composition (basic and acidic residues). 2 disordered regions span residues 1396 to 1421 (DPEAAEARRGQYESVAPSQNFPDSSA) and 1458 to 1524 (TYPE…AIEQ). Polar residues-rich tracts occupy residues 1411–1421 (APSQNFPDSSA) and 1487–1498 (WSESITESSPNL). O-linked (Xyl...) (chondroitin sulfate) serine glycosylation is found at serine 1517 and serine 1599. Positions 1664 to 1705 (LPSPDARPTTVWNSNSTSEWVSDKSFEGRKKKENEDEEGAVN) are disordered. Polar residues predominate over residues 1673–1683 (TVWNSNSTSEW). Residue asparagine 1678 is glycosylated (N-linked (GlcNAc...) asparagine). Over residues 1684–1697 (VSDKSFEGRKKKEN) the composition is skewed to basic and acidic residues. O-linked (Xyl...) (chondroitin sulfate) serine glycans are attached at residues serine 1907 and serine 1931. The tract at residues 1926 to 1965 (VGMGGSDDERVRDTQTSSSIPTTSDNIYPVPDSKGPDSTV) is disordered. Positions 1939-1951 (TQTSSSIPTTSDN) are enriched in polar residues. N-linked (GlcNAc...) asparagine glycosylation occurs at asparagine 2053. 2 O-linked (Xyl...) (chondroitin sulfate) serine glycosylation sites follow: serine 2219 and serine 2226. A glycan (N-linked (GlcNAc...) asparagine) is linked at asparagine 2243. Positions 2308–2322 (TLSHTGTEEPTTSTL) are enriched in polar residues. Disordered stretches follow at residues 2308-2374 (TLSH…ATSP) and 2475-2494 (YPTSTLPSTEPYKSPSEGIE). Asparagine 2361 is a glycosylation site (N-linked (GlcNAc...) asparagine). The span at 2475 to 2486 (YPTSTLPSTEPY) shows a compositional bias: low complexity. Phosphoserine is present on residues serine 2585 and serine 2586. Asparagine 2626 is a glycosylation site (N-linked (GlcNAc...) asparagine). O-linked (Xyl...) (chondroitin sulfate) serine glycans are attached at residues serine 2696, serine 2697, and serine 2741. The segment at 2853–2908 (LGGNVHRTEPPSMSRDPALDVSEDESKHKLLEELETSPTKPETSQDFPNKAKDHIP) is disordered. The span at 2888 to 2899 (TSPTKPETSQDF) shows a compositional bias: polar residues. A glycan (N-linked (GlcNAc...) asparagine) is linked at asparagine 3029. Positions 3051–3087 (GPDLCKTNPCLNGGTCYPTETSYVCTCAPGYSGDQCE) constitute an EGF-like 1 domain. Cystine bridges form between cysteine 3055–cysteine 3066, cysteine 3060–cysteine 3075, cysteine 3077–cysteine 3086, cysteine 3093–cysteine 3104, cysteine 3098–cysteine 3113, cysteine 3115–cysteine 3124, cysteine 3131–cysteine 3142, cysteine 3159–cysteine 3251, cysteine 3227–cysteine 3243, cysteine 3258–cysteine 3301, and cysteine 3287–cysteine 3314. The EGF-like 2; calcium-binding domain maps to 3089 to 3125 (DFDECHSNPCRNGATCVDGFNTFRCLCLPSYVGALCE). Positions 3138–3252 (FQGQCYKYFA…CNYHLTYTCK (115 aa)) constitute a C-type lectin domain. The 61-residue stretch at 3256–3316 (VACGQPPVVE…WAMPKITCMN (61 aa)) folds into the Sushi domain. N-linked (GlcNAc...) asparagine glycosylation is found at asparagine 3331 and asparagine 3341. A compositionally biased stretch (polar residues) spans 3331-3342 (NSSSAKDNSINT). Residues 3331–3357 (NSSSAKDNSINTSKHEHRWSRRQETRR) are disordered.

This sequence belongs to the aggrecan/versican proteoglycan family. Interacts with FBLN1. Phosphorylated by FAM20C in the extracellular medium. Post-translationally, proteolytically cleaved by ADAMTS5 and ADAMTS15 in the pericellular matrix surrounding myoblasts, facilitating myoblast contact and fusion which is required for skeletal muscle development and regeneration. In terms of tissue distribution, expressed in the retina (at protein level). Isoform V2: Only expressed in brain.

It is found in the secreted. Its subcellular location is the extracellular space. The protein localises to the extracellular matrix. The protein resides in the cell projection. It localises to the cilium. It is found in the photoreceptor outer segment. Its subcellular location is the interphotoreceptor matrix. Its function is as follows. May play a role in intercellular signaling and in connecting cells with the extracellular matrix. May take part in the regulation of cell motility, growth and differentiation. Binds hyaluronic acid. The sequence is that of Versican core protein (Vcan) from Mus musculus (Mouse).